The chain runs to 695 residues: MEEKPGQPQPQHHHSHHHPHHHPQQQQQQPHHHHHYYFYNHSHNHHHHHHHQQPHQYLQHGAEGSPKAQPKPLKHEQKHTLQQHQETPKKKTGYGELNGNAGEREISLKNLSSDEATNPISRVLNGNQQVVDTSLKQTVKANTFGKAGIKTKNFIQKNSMDKKNGKSYENKSGENQSVDKSDTIPIPNGVVTNNSGYITNGYMGKGADNDGSGSESGYTTPKKRKARRNSAKGCENLNIVQDKIMQQETSVPTLKQGLETFKPDYSEQKGNRVDGSKPIWKYETGPGGTSRGKPAVGDMLRKSSDSKPGVSSKKFDDRPKGKHASAVASKEDSWTLFKPPPVFPVDNSSAKIVPKISYASKVKENLNKTIQNSSVSPTSSSSSSSSTGETQTQSSSRLSQVPMSALKSVTSANFSNGPVLAGTDGNVYPPGGQPLLTTAANTLTPISSGTDSVLQDMSLTSAAVEQIKTSLFIYPSNMQTMLLSTAQVDLPSQTDQQNLGDIFQNQWGLSFINEPSAGPETVTGKSSEHKVMEVTFQGEYPATLVSQGAEIIPSGTEHPVFPKAYELEKRTSPQVLGSILKSGTTSESGALSLEPSHIGDLQKADTSSQGALVFLSKDYEIESQNPLASPTNTLLGSAKEQRYQRGLERNDSWGSFDLRAAIVYHTKEMESIWNLQKQDPKRIITYNEAMDSPDQ.

The interval 1–100 (MEEKPGQPQP…KTGYGELNGN (100 aa)) is disordered. Composition is skewed to basic residues over residues 11–23 (QHHHSHHHPHHHP) and 30–53 (PHHHHHYYFYNHSHNHHHHHHHQQ). A Glycyl lysine isopeptide (Lys-Gly) (interchain with G-Cter in SUMO2) cross-link involves residue Lys-78. Thr-87 is modified (phosphothreonine). Lys-109 participates in a covalent cross-link: Glycyl lysine isopeptide (Lys-Gly) (interchain with G-Cter in SUMO2). Phosphoserine occurs at positions 112 and 113. Glycyl lysine isopeptide (Lys-Gly) (interchain with G-Cter in SUMO2) cross-links involve residues Lys-136, Lys-146, Lys-157, and Lys-171. 4 disordered regions span residues 155 to 189 (IQKNSMDKKNGKSYENKSGENQSVDKSDTIPIPNG), 204 to 234 (GKGADNDGSGSESGYTTPKKRKARRNSAKGC), 261 to 341 (FKPD…KPPP), and 369 to 402 (TIQNSSVSPTSSSSSSSSTGETQTQSSSRLSQVP). The span at 159–182 (SMDKKNGKSYENKSGENQSVDKSD) shows a compositional bias: basic and acidic residues. Phosphoserine occurs at positions 212 and 214. At Tyr-218 the chain carries Phosphotyrosine. Phosphothreonine occurs at positions 219 and 220. Residues 221–230 (PKKRKARRNS) are compositionally biased toward basic residues. The segment covering 261–275 (FKPDYSEQKGNRVDG) has biased composition (basic and acidic residues). Residues Lys-262 and Lys-281 each participate in a glycyl lysine isopeptide (Lys-Gly) (interchain with G-Cter in SUMO2) cross-link. At Arg-291 the chain carries Omega-N-methylarginine. Residue Lys-293 forms a Glycyl lysine isopeptide (Lys-Gly) (interchain with G-Cter in SUMO2) linkage. Ser-304 bears the Phosphoserine mark. Lys-307 participates in a covalent cross-link: Glycyl lysine isopeptide (Lys-Gly) (interchain with G-Cter in SUMO2). Residues 373-396 (SSVSPTSSSSSSSSTGETQTQSSS) show a composition bias toward low complexity. Ser-376 bears the Phosphoserine mark. Position 571 is a phosphothreonine (Thr-571). Ser-572, Ser-592, Ser-608, and Ser-629 each carry phosphoserine. A Phosphothreonine modification is found at Thr-633. Residues Ser-637, Ser-652, Ser-655, and Ser-692 each carry the phosphoserine modification.

In terms of assembly, interacts with FMR1 (via N-terminus). Interacts with DDX6.

It is found in the nucleus. It localises to the cytoplasm. The protein resides in the stress granule. Functionally, binds RNA. This chain is FMR1-interacting protein NUFIP2, found in Homo sapiens (Human).